The chain runs to 363 residues: tRNA N6-adenosine threonylcarbamoyltransferase (363 aa).

Positions 121 and 125 each coordinate Fe cation. Residues 143–147, Asp-176, Gly-189, and Asn-287 each bind substrate; that span reads LASGG. Asp-315 is a Fe cation binding site.

It belongs to the KAE1 / TsaD family. Requires Fe(2+) as cofactor.

The protein resides in the cytoplasm. It catalyses the reaction L-threonylcarbamoyladenylate + adenosine(37) in tRNA = N(6)-L-threonylcarbamoyladenosine(37) in tRNA + AMP + H(+). Its function is as follows. Required for the formation of a threonylcarbamoyl group on adenosine at position 37 (t(6)A37) in tRNAs that read codons beginning with adenine. Is involved in the transfer of the threonylcarbamoyl moiety of threonylcarbamoyl-AMP (TC-AMP) to the N6 group of A37, together with TsaE and TsaB. TsaD likely plays a direct catalytic role in this reaction. The chain is tRNA N6-adenosine threonylcarbamoyltransferase from Rhodopseudomonas palustris (strain HaA2).